A 373-amino-acid polypeptide reads, in one-letter code: MIELITDKPHPMHLVDSLCDPQLFATLAKTSPLIFITNSTLEILVLPPLLETARSLGFSVEILIIPEGEQAKTETTFLYLHKQLATLTIPRQATLIGVGGGVVLDIVGFVASTHCRGMPFIAVPTTLVAMIDASIGGKNGINLDHIKNRIGSFYLPKDVWICPSVLSSLPEQEFYHGIAECIKHAYIADASILPILQNPASLRSTKQLSLLIKRNCLCKASIVGKDIRDHGIRQILNFGHTLGHALEMLFTGKISHGFAISVGMVLETKLSLAMGVARNPNILHFLVQDLLRYQLPTSLKDLYAQAQIPIHSCSQILSALSYDKKKQNASLPPFVMIEEIGLAASCNGSFCQPASNHFLTHILKEDLHAMHDH.

Residues 67–72, 101–105, 125–126, lysine 138, and lysine 147 each bind NAD(+); these read EGEQAK, GVVLD, and TT. Glutamate 180, histidine 240, and histidine 256 together coordinate Zn(2+).

It belongs to the sugar phosphate cyclases superfamily. Dehydroquinate synthase family. NAD(+) serves as cofactor. Requires Co(2+) as cofactor. Zn(2+) is required as a cofactor.

The protein localises to the cytoplasm. The enzyme catalyses 7-phospho-2-dehydro-3-deoxy-D-arabino-heptonate = 3-dehydroquinate + phosphate. It participates in metabolic intermediate biosynthesis; chorismate biosynthesis; chorismate from D-erythrose 4-phosphate and phosphoenolpyruvate: step 2/7. Catalyzes the conversion of 3-deoxy-D-arabino-heptulosonate 7-phosphate (DAHP) to dehydroquinate (DHQ). The polypeptide is 3-dehydroquinate synthase (aroB) (Chlamydia muridarum (strain MoPn / Nigg)).